Consider the following 177-residue polypeptide: Peptidyl-tRNA hydrolase 1 (177 aa).

Tyrosine 18 contributes to the tRNA binding site. Residue histidine 23 is the Proton acceptor of the active site. Positions 65, 67, and 113 each coordinate tRNA.

Belongs to the PTH family. In terms of assembly, monomer.

The protein resides in the cytoplasm. The enzyme catalyses an N-acyl-L-alpha-aminoacyl-tRNA + H2O = an N-acyl-L-amino acid + a tRNA + H(+). Its function is as follows. Hydrolyzes ribosome-free peptidyl-tRNAs (with 1 or more amino acids incorporated), which drop off the ribosome during protein synthesis, or as a result of ribosome stalling. Catalyzes the release of premature peptidyl moieties from peptidyl-tRNA molecules trapped in stalled 50S ribosomal subunits, and thus maintains levels of free tRNAs and 50S ribosomes. The polypeptide is Peptidyl-tRNA hydrolase 1 (Corynebacterium glutamicum (strain ATCC 13032 / DSM 20300 / JCM 1318 / BCRC 11384 / CCUG 27702 / LMG 3730 / NBRC 12168 / NCIMB 10025 / NRRL B-2784 / 534)).